A 245-amino-acid polypeptide reads, in one-letter code: GDSL esterase/lipase At4g16220 (245 aa).

An N-terminal signal peptide occupies residues M1–A24. S37 functions as the Nucleophile in the catalytic mechanism.

It belongs to the 'GDSL' lipolytic enzyme family.

The protein localises to the secreted. The sequence is that of GDSL esterase/lipase At4g16220 from Arabidopsis thaliana (Mouse-ear cress).